A 100-amino-acid chain; its full sequence is Integration host factor subunit alpha (100 aa).

Residues 53-72 form a disordered region; it reads FDLRDKKQRPGRNPKTGEEI.

Belongs to the bacterial histone-like protein family. Heterodimer of an alpha and a beta chain.

Its function is as follows. This protein is one of the two subunits of integration host factor, a specific DNA-binding protein that functions in genetic recombination as well as in transcriptional and translational control. In Marinobacter nauticus (strain ATCC 700491 / DSM 11845 / VT8) (Marinobacter aquaeolei), this protein is Integration host factor subunit alpha.